We begin with the raw amino-acid sequence, 949 residues long: Bifunctional uridylyltransferase/uridylyl-removing enzyme (949 aa).

Residues 1–37 (MKETSFWGETPSLSFADDTDKPLSDRTASPPCDPASS) form a disordered region. Residues 1-395 (MKETSFWGET…TTGEPPKVVP (395 aa)) are uridylyltransferase. Residues 396–756 (GPEEFQTIAG…AYPIPERGVT (361 aa)) form a uridylyl-removing region. In terms of domain architecture, HD spans 516-632 (VDEHIVEAVR…LDLADTIQSP (117 aa)). ACT domains follow at residues 757–834 (ELTV…LDIR) and 870–949 (VIEV…TPAS).

This sequence belongs to the GlnD family. Mg(2+) is required as a cofactor.

It carries out the reaction [protein-PII]-L-tyrosine + UTP = [protein-PII]-uridylyl-L-tyrosine + diphosphate. The enzyme catalyses [protein-PII]-uridylyl-L-tyrosine + H2O = [protein-PII]-L-tyrosine + UMP + H(+). Uridylyltransferase (UTase) activity is inhibited by glutamine, while glutamine activates uridylyl-removing (UR) activity. Modifies, by uridylylation and deuridylylation, the PII regulatory proteins (GlnB and homologs), in response to the nitrogen status of the cell that GlnD senses through the glutamine level. Under low glutamine levels, catalyzes the conversion of the PII proteins and UTP to PII-UMP and PPi, while under higher glutamine levels, GlnD hydrolyzes PII-UMP to PII and UMP (deuridylylation). Thus, controls uridylylation state and activity of the PII proteins, and plays an important role in the regulation of nitrogen assimilation and metabolism. This chain is Bifunctional uridylyltransferase/uridylyl-removing enzyme, found in Gluconobacter oxydans (strain 621H) (Gluconobacter suboxydans).